The sequence spans 427 residues: MSSIVDVIAREILDSRGNPTVEADVLLESGVMGRAAVPSGASTGTREAIELRDGDASRYLGKGVMQAVENVNTEISEAIIGLDAQEQAFIDQTMIDLDGTDNKSRLGANAILAVSMAVAKAAAEESGLPLYRYFGGMSPMQMPVPMMNIINGGEHANNSLDIQEFMVMPVGAANIREAIRCGAEIFHALKKLLNKKGHSTAVGDEGGFAPNLGSHAEALQIIMEAIEIAGYVPGQDVLLALDCAASEFYKDGKYKLAGEGLELTSAQFVDYLANLADQFPIVSIEDGMSEADWDGWKLLTDRLGDKVQIVGDDIFVTNTKIFKEGIKKGIGNSILIKINQIGTLSETFAAVEMAKRAGYTAVISHRSGETEDSTIADIAVGLNAGQIKTGSLSRSDRIAKYNQLIRIEEDLGDTASYPGRETFYNLR.

Gln163 contacts (2R)-2-phosphoglycerate. The active-site Proton donor is Glu205. Positions 242, 285, and 312 each coordinate Mg(2+). Positions 337, 366, 367, and 388 each coordinate (2R)-2-phosphoglycerate. Lys337 functions as the Proton acceptor in the catalytic mechanism.

Belongs to the enolase family. Mg(2+) serves as cofactor.

The protein resides in the cytoplasm. It localises to the secreted. The protein localises to the cell surface. It carries out the reaction (2R)-2-phosphoglycerate = phosphoenolpyruvate + H2O. The protein operates within carbohydrate degradation; glycolysis; pyruvate from D-glyceraldehyde 3-phosphate: step 4/5. Catalyzes the reversible conversion of 2-phosphoglycerate (2-PG) into phosphoenolpyruvate (PEP). It is essential for the degradation of carbohydrates via glycolysis. This Dechloromonas aromatica (strain RCB) protein is Enolase.